A 297-amino-acid chain; its full sequence is 4-hydroxy-tetrahydrodipicolinate synthase (297 aa).

Thr47 lines the pyruvate pocket. Tyr135 serves as the catalytic Proton donor/acceptor. Lys163 acts as the Schiff-base intermediate with substrate in catalysis. Position 205 (Ile205) interacts with pyruvate.

It belongs to the DapA family. Homotetramer; dimer of dimers.

It is found in the cytoplasm. It catalyses the reaction L-aspartate 4-semialdehyde + pyruvate = (2S,4S)-4-hydroxy-2,3,4,5-tetrahydrodipicolinate + H2O + H(+). It participates in amino-acid biosynthesis; L-lysine biosynthesis via DAP pathway; (S)-tetrahydrodipicolinate from L-aspartate: step 3/4. Catalyzes the condensation of (S)-aspartate-beta-semialdehyde [(S)-ASA] and pyruvate to 4-hydroxy-tetrahydrodipicolinate (HTPA). The sequence is that of 4-hydroxy-tetrahydrodipicolinate synthase from Dehalococcoides mccartyi (strain ATCC BAA-2266 / KCTC 15142 / 195) (Dehalococcoides ethenogenes (strain 195)).